The sequence spans 154 residues: Proline dehydrogenase transcriptional activator (154 aa).

The 62-residue stretch at 5–66 (IDATDRRILH…MLSPIRLGLI (62 aa)) folds into the HTH asnC-type domain. A DNA-binding region (H-T-H motif) is located at residues 24-43 (VTELARKVGLSKTPVAARIR).

Transcriptional activator of the putA gene in response to proline. This Rhodobacter capsulatus (Rhodopseudomonas capsulata) protein is Proline dehydrogenase transcriptional activator (putR).